We begin with the raw amino-acid sequence, 343 residues long: MSAFTPASEVLLRHSDDFEQSRILFAGDLQDDLPARLDTATSRAHTQQFHHWQVLSRQMGDNARFSLVATADDVADCDTLIYYWPKNKPEAQFQLMNLLSLLPVGTDIFVVGENRSGVRSAEQMLADYAPLNKVDSARRCGLYFGRLEKQPVFDANKFWGEYSVDGLTVKTLPGVFSRDGLDVGSQLLLSTLTPHTKGKVLDVGCGAGVLSVAFARHSPKIRLTLCDVSAPAVEASRATLATNGVEGEVFASNVFSEVKGRFDMIISNPPFHDGMQTSLDAAQTLIRGAVRHLNSGGELRIVANAFLPYPDVLDETFGFHEVIAQTGRFKVYRAIMTRQAKKG.

The protein belongs to the methyltransferase superfamily. RsmC family. As to quaternary structure, monomer.

Its subcellular location is the cytoplasm. It catalyses the reaction guanosine(1207) in 16S rRNA + S-adenosyl-L-methionine = N(2)-methylguanosine(1207) in 16S rRNA + S-adenosyl-L-homocysteine + H(+). Functionally, specifically methylates the guanine in position 1207 of 16S rRNA in the 30S particle. The sequence is that of Ribosomal RNA small subunit methyltransferase C from Escherichia coli O6:K15:H31 (strain 536 / UPEC).